The sequence spans 201 residues: Recombination protein RecR (201 aa).

A C4-type zinc finger spans residues 57–72 (CRDCRTFTEQEVCTIC). One can recognise a Toprim domain in the interval 81-176 (GQICVVESPA…LASRIAHGVP (96 aa)).

It belongs to the RecR family.

May play a role in DNA repair. It seems to be involved in an RecBC-independent recombinational process of DNA repair. It may act with RecF and RecO. The chain is Recombination protein RecR from Edwardsiella ictaluri (strain 93-146).